Here is an 886-residue protein sequence, read N- to C-terminus: Protein translocase subunit SecA (886 aa).

ATP contacts are provided by residues Q81, 99–103 (GEGKT), and D489.

The protein belongs to the SecA family.

The protein localises to the plastid. It is found in the chloroplast stroma. It localises to the chloroplast thylakoid membrane. The catalysed reaction is ATP + H2O + cellular proteinSide 1 = ADP + phosphate + cellular proteinSide 2.. Its function is as follows. Has a central role in coupling the hydrolysis of ATP to the transfer of proteins across the thylakoid membrane. This Phaeodactylum tricornutum (strain CCAP 1055/1) protein is Protein translocase subunit SecA.